A 281-amino-acid polypeptide reads, in one-letter code: 2,3,4,5-tetrahydropyridine-2,6-dicarboxylate N-succinyltransferase (281 aa).

Residues Arg-108 and Asp-145 each contribute to the substrate site.

It belongs to the transferase hexapeptide repeat family. Homotrimer.

The protein resides in the cytoplasm. The catalysed reaction is (S)-2,3,4,5-tetrahydrodipicolinate + succinyl-CoA + H2O = (S)-2-succinylamino-6-oxoheptanedioate + CoA. It participates in amino-acid biosynthesis; L-lysine biosynthesis via DAP pathway; LL-2,6-diaminopimelate from (S)-tetrahydrodipicolinate (succinylase route): step 1/3. The polypeptide is 2,3,4,5-tetrahydropyridine-2,6-dicarboxylate N-succinyltransferase (Bradyrhizobium diazoefficiens (strain JCM 10833 / BCRC 13528 / IAM 13628 / NBRC 14792 / USDA 110)).